The primary structure comprises 291 residues: ATP synthase gamma chain (291 aa).

Belongs to the ATPase gamma chain family. In terms of assembly, F-type ATPases have 2 components, CF(1) - the catalytic core - and CF(0) - the membrane proton channel. CF(1) has five subunits: alpha(3), beta(3), gamma(1), delta(1), epsilon(1). CF(0) has three main subunits: a, b and c.

It is found in the cell inner membrane. Functionally, produces ATP from ADP in the presence of a proton gradient across the membrane. The gamma chain is believed to be important in regulating ATPase activity and the flow of protons through the CF(0) complex. This Ruegeria pomeroyi (strain ATCC 700808 / DSM 15171 / DSS-3) (Silicibacter pomeroyi) protein is ATP synthase gamma chain.